A 319-amino-acid chain; its full sequence is HTH-type transcriptional regulator YidZ (319 aa).

In terms of domain architecture, HTH lysR-type spans L8–T65. Positions V25–A44 form a DNA-binding region, H-T-H motif.

Belongs to the LysR transcriptional regulatory family.

Its function is as follows. Involved in anaerobic NO protection. The chain is HTH-type transcriptional regulator YidZ from Escherichia coli O139:H28 (strain E24377A / ETEC).